The sequence spans 236 residues: ATP synthase subunit a (236 aa).

5 helical membrane passes run 18-38 (SNLL…VLCT), 80-100 (VTLL…AIVI), 112-132 (DPAI…YYGI), 179-199 (ILLS…IGAA), and 200-220 (IPML…AFIF).

The protein belongs to the ATPase A chain family. F-type ATPases have 2 components, CF(1) - the catalytic core - and CF(0) - the membrane proton channel. CF(1) has five subunits: alpha(3), beta(3), gamma(1), delta(1), epsilon(1). CF(0) has three main subunits: a(1), b(2) and c(9-12). The alpha and beta chains form an alternating ring which encloses part of the gamma chain. CF(1) is attached to CF(0) by a central stalk formed by the gamma and epsilon chains, while a peripheral stalk is formed by the delta and b chains.

It is found in the cell membrane. Functionally, key component of the proton channel; it plays a direct role in the translocation of protons across the membrane. The chain is ATP synthase subunit a from Priestia megaterium (strain ATCC 12872 / QMB1551) (Bacillus megaterium).